Here is a 496-residue protein sequence, read N- to C-terminus: Bifunctional protein HldE (496 aa).

Positions 1–331 (MDPTPALAEI…AAVHQEEVSA (331 aa)) are ribokinase. 206–209 (NRKE) provides a ligand contact to ATP. Asp276 is an active-site residue. The interval 358–496 (FTNGCFDLLH…GGSRRSGDTL (139 aa)) is cytidylyltransferase.

This sequence in the N-terminal section; belongs to the carbohydrate kinase PfkB family. In the C-terminal section; belongs to the cytidylyltransferase family. Homodimer.

The catalysed reaction is D-glycero-beta-D-manno-heptose 7-phosphate + ATP = D-glycero-beta-D-manno-heptose 1,7-bisphosphate + ADP + H(+). The enzyme catalyses D-glycero-beta-D-manno-heptose 1-phosphate + ATP + H(+) = ADP-D-glycero-beta-D-manno-heptose + diphosphate. It functions in the pathway nucleotide-sugar biosynthesis; ADP-L-glycero-beta-D-manno-heptose biosynthesis; ADP-L-glycero-beta-D-manno-heptose from D-glycero-beta-D-manno-heptose 7-phosphate: step 1/4. The protein operates within nucleotide-sugar biosynthesis; ADP-L-glycero-beta-D-manno-heptose biosynthesis; ADP-L-glycero-beta-D-manno-heptose from D-glycero-beta-D-manno-heptose 7-phosphate: step 3/4. Its function is as follows. Catalyzes the phosphorylation of D-glycero-D-manno-heptose 7-phosphate at the C-1 position to selectively form D-glycero-beta-D-manno-heptose-1,7-bisphosphate. Catalyzes the ADP transfer from ATP to D-glycero-beta-D-manno-heptose 1-phosphate, yielding ADP-D-glycero-beta-D-manno-heptose. This is Bifunctional protein HldE from Rhodospirillum rubrum (strain ATCC 11170 / ATH 1.1.1 / DSM 467 / LMG 4362 / NCIMB 8255 / S1).